We begin with the raw amino-acid sequence, 179 residues long: Translationally-controlled tumor protein homolog (179 aa).

Positions 1–179 (MIIYKDIISG…WKHGLEEMKV (179 aa)) constitute a TCTP domain.

The protein belongs to the TCTP family.

The protein localises to the cytoplasm. The protein resides in the cytoskeleton. Functionally, involved in protein synthesis. Involved in microtubule stabilization. The polypeptide is Translationally-controlled tumor protein homolog (Aspergillus fumigatus (strain ATCC MYA-4609 / CBS 101355 / FGSC A1100 / Af293) (Neosartorya fumigata)).